A 291-amino-acid polypeptide reads, in one-letter code: Mitochondrial citrate transporter B (291 aa).

Solcar repeat units follow at residues 10–97 (PQKW…IKNS), 105–193 (LSPA…LKES), and 201–283 (PTLF…MTYL). The next 6 membrane-spanning stretches (helical) occupy residues 16 to 36 (LIAGGVAGGVEAASTYPFEYA), 74 to 94 (STLIIGTTAKAAVRFVSYDTI), 112 to 132 (VAGVVAGATESVLAVTPTERI), 172 to 192 (TTLKQSATSAVRMGTYNILKE), 203 to 220 (LFTTFCMGALAGVVTVYA), and 255 to 276 (FWKGSSMRLGRLLLSGGIVFSV).

It belongs to the mitochondrial carrier (TC 2.A.29) family.

Its subcellular location is the mitochondrion inner membrane. The catalysed reaction is citrate(in) + H(+)(in) = citrate(out) + H(+)(out). Its function is as follows. Mitochondrial transporter that mediates citrate export from mitochondria to cytoplasm. Both ctpA, ctpB, and ctpD play important roles in citric acid transport across the mitochondrial membrane and function in a redundant manner. The chain is Mitochondrial citrate transporter B from Aspergillus niger (strain ATCC 1015 / CBS 113.46 / FGSC A1144 / LSHB Ac4 / NCTC 3858a / NRRL 328 / USDA 3528.7).